Here is a 267-residue protein sequence, read N- to C-terminus: Mannose-specific lectin 1 (267 aa).

Positions methionine 1–alanine 26 are cleaved as a signal peptide. 2 consecutive Bulb-type lectin domains span residues threonine 29 to proline 134 and asparagine 148 to lysine 255. Beta-D-mannose-binding positions include glutamine 54–asparagine 58, tyrosine 62, tryptophan 66, glutamine 67, glutamine 173–asparagine 177, tyrosine 181, and tyrosine 185–glutamine 188. Residues glutamine 54–tyrosine 62 carry the Carbohydrate-binding motif 1 motif. 2 disulfides stabilise this stretch: cysteine 57–cysteine 77 and cysteine 176–cysteine 198. A Carbohydrate-binding motif 2 motif is present at residues glutamine 173–tyrosine 181.

In terms of assembly, forms heterotetramer of 2 chains 1 and 2 chains 2 arranged as a dimer of chain 1 and chain 2 heterodimers.

The protein localises to the secreted. Mannose-specific lectin. Shows agglutinating activity towards erythrocytes from rabbit. In Colocasia esculenta (Wild taro), this protein is Mannose-specific lectin 1.